Reading from the N-terminus, the 565-residue chain is Glycine/sarcosine/dimethylglycine N-methyltransferase (565 aa).

A compositionally biased stretch (basic and acidic residues) spans 1-10 (MTKSVDDLAR). The tract at residues 1–34 (MTKSVDDLARGDQAGDEQDPVHREQQTFGDNPLE) is disordered. S-adenosyl-L-methionine contacts are provided by residues tyrosine 45, tryptophan 53, arginine 62, alanine 86, aspartate 107, 134–135 (DW), and leucine 152. Substrate is bound by residues asparagine 154, arginine 187, and tyrosine 226.

This sequence belongs to the class I-like SAM-binding methyltransferase superfamily. Glycine N-methyltransferase family. In terms of assembly, monomer.

It carries out the reaction glycine + 2 S-adenosyl-L-methionine = N,N-dimethylglycine + 2 S-adenosyl-L-homocysteine + 2 H(+). The catalysed reaction is sarcosine + 2 S-adenosyl-L-methionine = glycine betaine + 2 S-adenosyl-L-homocysteine + 2 H(+). The enzyme catalyses glycine + S-adenosyl-L-methionine = sarcosine + S-adenosyl-L-homocysteine + H(+). It catalyses the reaction sarcosine + S-adenosyl-L-methionine = N,N-dimethylglycine + S-adenosyl-L-homocysteine + H(+). It carries out the reaction N,N-dimethylglycine + S-adenosyl-L-methionine = glycine betaine + S-adenosyl-L-homocysteine + H(+). It functions in the pathway amine and polyamine biosynthesis; betaine biosynthesis via glycine pathway; betaine from glycine: step 1/3. The protein operates within amine and polyamine biosynthesis; betaine biosynthesis via glycine pathway; betaine from glycine: step 2/3. Its pathway is amine and polyamine biosynthesis; betaine biosynthesis via glycine pathway; betaine from glycine: step 3/3. In terms of biological role, catalyzes the methylation of glycine, sarcosine and dimethylglycine to sarcosine, dimethylglycine and betaine, respectively, with S-adenosylmethionine (AdoMet) acting as the methyl donor. Shows low level of activity on glycine when expressed in E.coli. The sequence is that of Glycine/sarcosine/dimethylglycine N-methyltransferase from Actinopolyspora halophila.